The chain runs to 1378 residues: Protein CLASP-1 (1378 aa).

One copy of the HEAT 1 repeat lies at 168–206; the sequence is LIPQLCRLTNDPNSEVRDVSTQCLIDLMVYGGKPIVAKI. Disordered regions lie at residues 231–254, 266–325, and 590–725; these read RGDLPPKHTITMETTPAQPSRNSL, IHPS…TRSS, and MLRD…HQTP. Composition is skewed to low complexity over residues 269-283 and 610-619; these read SASTTSFTSSARLST and NQKQQPNQQN. Polar residues-rich tracts occupy residues 620–630 and 637–648; these read ISQKFLSQRSA and IQLSVKPQTTAI. Positions 664–676 are enriched in low complexity; sequence SSTSTSFSAVRSS. Polar residues predominate over residues 677–690; sequence GYGQNQSTTPNRAK. The segment covering 704–721 has biased composition (low complexity); that stretch reads TNGNNNNKSSSSSPSTST. Residues 740-767 adopt a coiled-coil conformation; that stretch reads ASLTQEQANCLQNAMNTAKDEMSKNNED. Basic and acidic residues predominate over residues 775–784; the sequence is IRKTPPKEVP. The segment at 775-823 is disordered; sequence IRKTPPKEVPRSYNNSPFKPSNLDSSVHRSYNNNSPFRPSSGSVGSGSN. Positions 786–812 are enriched in polar residues; it reads SYNNSPFKPSNLDSSVHRSYNNNSPFR. An HEAT 2 repeat occupies 1305–1341; the sequence is HLIVNDVAPCFVTAYESMSSTVRKCAVFGLVALVQRV.

This sequence belongs to the CLASP family.

The protein resides in the cytoplasm. It is found in the cytoskeleton. Its function is as follows. Microtubule plus-end tracking protein that promotes the stabilization of dynamic microtubules. Operates redundantly with cls-2 and cls-3 in regulating microtubule processes which position the spindle during asymmetric cell division. In Caenorhabditis elegans, this protein is Protein CLASP-1 (cls-1).